The sequence spans 604 residues: Glutamyl-tRNA(Gln) amidotransferase subunit B, mitochondrial (604 aa).

The transit peptide at 1-48 directs the protein to the mitochondrion; the sequence is MIRQCLSRRGAYSRYRLAARGVELAEPFHHQSSRPQGRRNWSSSPRCS. Positions 28–57 are disordered; sequence FHHQSSRPQGRRNWSSSPRCSLDIRTDTPR. The span at 33–46 shows a compositional bias: polar residues; that stretch reads SRPQGRRNWSSSPR.

The protein belongs to the GatB/GatE family. GatB subfamily. Subunit of the heterotrimeric GatCAB amidotransferase (AdT) complex, composed of A, B and C subunits.

The protein resides in the mitochondrion. The catalysed reaction is L-glutamyl-tRNA(Gln) + L-glutamine + ATP + H2O = L-glutaminyl-tRNA(Gln) + L-glutamate + ADP + phosphate + H(+). In terms of biological role, allows the formation of correctly charged Gln-tRNA(Gln) through the transamidation of misacylated Glu-tRNA(Gln) in the mitochondria. The reaction takes place in the presence of glutamine and ATP through an activated gamma-phospho-Glu-tRNA(Gln). This Ajellomyces dermatitidis (strain ER-3 / ATCC MYA-2586) (Blastomyces dermatitidis) protein is Glutamyl-tRNA(Gln) amidotransferase subunit B, mitochondrial.